The chain runs to 434 residues: Eukaryotic translation initiation factor 3 subunit E (434 aa).

The PCI domain occupies 219–392 (FFNHPKGRDL…GHVVMGTQPL (174 aa)).

It belongs to the eIF-3 subunit E family. In terms of assembly, component of the eukaryotic translation initiation factor 3 (eIF-3) complex. The eIF-3 complex interacts with pix. Interacts with mxt.

Its subcellular location is the cytoplasm. Functionally, component of the eukaryotic translation initiation factor 3 (eIF-3) complex, which is involved in protein synthesis of a specialized repertoire of mRNAs and, together with other initiation factors, stimulates binding of mRNA and methionyl-tRNAi to the 40S ribosome. The eIF-3 complex specifically targets and initiates translation of a subset of mRNAs involved in cell proliferation. The polypeptide is Eukaryotic translation initiation factor 3 subunit E (eIF3-S6) (Drosophila ananassae (Fruit fly)).